We begin with the raw amino-acid sequence, 616 residues long: Cytochrome c oxidase subunit 1 (616 aa).

Residues 28-48 (HLYLISGGFFFLLGGLEALFI) form a helical membrane-spanning segment. Residue H72 coordinates Fe(II)-heme a. 6 helical membrane-spanning segments follow: residues 75–95 (TMIF…VVPL), 102–122 (VAFP…GLFL), 158–178 (GLQI…VTII), 198–218 (FVTS…LIFM), 243–263 (LFWV…FGIF), and 275–295 (LFGY…GFMV). Positions 249 and 253 each coordinate Cu cation. A cross-link (1'-histidyl-3'-tyrosine (His-Tyr)) is located at residues 249 to 253 (HPEVY). 2 residues coordinate Cu cation: H298 and H299. Transmembrane regions (helical) follow at residues 303–323 (VGMG…IAVP), 349–369 (AVAF…LASA), 380–400 (FVVA…LLAG), 420–440 (ITFW…HFLG), 463–483 (ISTI…INIV), 553–573 (SSFL…GFTY), and 577–597 (AGWG…SMFL). Residue H384 participates in Fe(II)-heme o binding. H384 serves as a coordination point for heme a3. Fe(II)-heme a is bound at residue H386.

This sequence belongs to the heme-copper respiratory oxidase family. It depends on Cu(2+) as a cofactor. Heme serves as cofactor.

It is found in the cell membrane. The catalysed reaction is 4 Fe(II)-[cytochrome c] + O2 + 8 H(+)(in) = 4 Fe(III)-[cytochrome c] + 2 H2O + 4 H(+)(out). It functions in the pathway energy metabolism; oxidative phosphorylation. In terms of biological role, cytochrome c oxidase is the component of the respiratory chain that catalyzes the reduction of oxygen to water. Subunits 1-3 form the functional core of the enzyme complex. Co I is the catalytic subunit of the enzyme. Electrons originating in cytochrome c are transferred via the copper A center of subunit 2 and heme a of subunit 1 to the bimetallic center formed by heme a3 and copper B. This cytochrome c oxidase shows proton pump activity across the membrane in addition to the electron transfer. The chain is Cytochrome c oxidase subunit 1 (ctaD) from Bacillus sp. (strain PS3).